A 321-amino-acid chain; its full sequence is tRNA(Ile)-lysidine synthase (321 aa).

Residue 30 to 35 (SGGSDS) coordinates ATP.

It belongs to the tRNA(Ile)-lysidine synthase family.

It is found in the cytoplasm. The enzyme catalyses cytidine(34) in tRNA(Ile2) + L-lysine + ATP = lysidine(34) in tRNA(Ile2) + AMP + diphosphate + H(+). Functionally, ligates lysine onto the cytidine present at position 34 of the AUA codon-specific tRNA(Ile) that contains the anticodon CAU, in an ATP-dependent manner. Cytidine is converted to lysidine, thus changing the amino acid specificity of the tRNA from methionine to isoleucine. This is tRNA(Ile)-lysidine synthase from Chlamydia trachomatis serovar L2 (strain ATCC VR-902B / DSM 19102 / 434/Bu).